The chain runs to 546 residues: ATP synthase F(1) complex catalytic subunit beta, mitochondrial (546 aa).

A mitochondrion-targeting transit peptide spans 1–45 (MLGFVGRVAATSASGALRGLGPSPLPQVKVLLRASPAALQSARDY). 3 positions are modified to N6-acetyllysine; alternate: K123, K132, and K160. 3 positions are modified to N6-succinyllysine; alternate: K123, K132, and K160. An N6-acetyllysine modification is found at K197. ADP contacts are provided by G208, V209, G210, K211, T212, and V213. An ATP-binding site is contributed by G208. Residues G208, V209, G210, K211, and T212 each contribute to the phosphate site. Residues G210, K211, T212, and V213 each coordinate ATP. T212 serves as a coordination point for Mg(2+). Residue E237 participates in Mg(2+) binding. R238 is a binding site for ATP. 2 positions are modified to N6-acetyllysine; alternate: K258 and K263. N6-succinyllysine; alternate occurs at positions 258 and 263. Phosphothreonine is present on T311. K425 bears the N6-acetyllysine mark. Phosphoserine is present on S432. An N6-acetyllysine mark is found at K479 and K484. The residue at position 521 (K521) is an N6-acetyllysine; alternate. K521 carries the post-translational modification N6-succinyllysine; alternate. The tract at residues 521 to 546 (KLAEEHSATQTSPSPKGAAAXXXRVV) is disordered.

This sequence belongs to the ATPase alpha/beta chains family. As to quaternary structure, homotrimer. Component of the ATP synthase complex composed at least of ATP5F1A/subunit alpha, ATP5F1B/subunit beta, ATP5MC1/subunit c (homooctomer), MT-ATP6/subunit a, MT-ATP8/subunit 8, ATP5ME/subunit e, ATP5MF/subunit f, ATP5MG/subunit g, ATP5MK/subunit k, ATP5MJ/subunit j, ATP5F1C/subunit gamma, ATP5F1D/subunit delta, ATP5F1E/subunit epsilon, ATP5PF/subunit F6, ATP5PB/subunit b, ATP5PD/subunit d, ATP5PO/subunit OSCP. ATP synthase complex consists of a soluble F(1) head domain (subunits alpha(3) and beta(3)) - the catalytic core - and a membrane F(0) domain - the membrane proton channel (subunits c, a, 8, e, f, g, k and j). These two domains are linked by a central stalk (subunits gamma, delta, and epsilon) rotating inside the F1 region and a stationary peripheral stalk (subunits F6, b, d, and OSCP). Interacts with PPIF. Interacts with BCL2L1 isoform BCL-X(L); the interaction mediates the association of BCL2L1 isoform BCL-X(L) with the mitochondrial membrane F(1)F(0) ATP synthase and enhances neurons metabolic efficiency. Interacts with CLN5 and PPT1. Interacts with S100A1; this interaction increases F1-ATPase activity. Interacts with MTLN. Interacts with TTC5/STRAP; the interaction results in decreased mitochondrial ATP production.

The protein localises to the mitochondrion inner membrane. The catalysed reaction is ATP + H2O + 4 H(+)(in) = ADP + phosphate + 5 H(+)(out). In terms of biological role, catalytic subunit beta, of the mitochondrial membrane ATP synthase complex (F(1)F(0) ATP synthase or Complex V) that produces ATP from ADP in the presence of a proton gradient across the membrane which is generated by electron transport complexes of the respiratory chain. ATP synthase complex consist of a soluble F(1) head domain - the catalytic core - and a membrane F(1) domain - the membrane proton channel. These two domains are linked by a central stalk rotating inside the F(1) region and a stationary peripheral stalk. During catalysis, ATP synthesis in the catalytic domain of F(1) is coupled via a rotary mechanism of the central stalk subunits to proton translocation. In vivo, can only synthesize ATP although its ATP hydrolase activity can be activated artificially in vitro. With the subunit alpha (ATP5F1A), forms the catalytic core in the F(1) domain. In Canis lupus familiaris (Dog), this protein is ATP synthase F(1) complex catalytic subunit beta, mitochondrial.